The chain runs to 123 residues: Large ribosomal subunit protein bL12 (123 aa).

The protein belongs to the bacterial ribosomal protein bL12 family. As to quaternary structure, homodimer. Part of the ribosomal stalk of the 50S ribosomal subunit. Forms a multimeric L10(L12)X complex, where L10 forms an elongated spine to which 2 to 4 L12 dimers bind in a sequential fashion. Binds GTP-bound translation factors.

Forms part of the ribosomal stalk which helps the ribosome interact with GTP-bound translation factors. Is thus essential for accurate translation. The protein is Large ribosomal subunit protein bL12 of Clostridium kluyveri (strain NBRC 12016).